A 343-amino-acid polypeptide reads, in one-letter code: Holliday junction branch migration complex subunit RuvB (343 aa).

The segment at 1–178 (MNFVQQNREG…FGMILELQFY (178 aa)) is large ATPase domain (RuvB-L). Residues Leu17, Arg18, Gly59, Lys62, Thr63, Thr64, 125–127 (EDY), Arg168, Tyr178, and Arg215 contribute to the ATP site. Mg(2+) is bound at residue Thr63. The interval 179-249 (TVKELMEIIK…LVEKTMDILE (71 aa)) is small ATPAse domain (RuvB-S). The segment at 252–343 (KLGLDEMDRK…DESLRKSDES (92 aa)) is head domain (RuvB-H). Residues Arg307 and Arg312 each contribute to the DNA site.

The protein belongs to the RuvB family. As to quaternary structure, homohexamer. Forms an RuvA(8)-RuvB(12)-Holliday junction (HJ) complex. HJ DNA is sandwiched between 2 RuvA tetramers; dsDNA enters through RuvA and exits via RuvB. An RuvB hexamer assembles on each DNA strand where it exits the tetramer. Each RuvB hexamer is contacted by two RuvA subunits (via domain III) on 2 adjacent RuvB subunits; this complex drives branch migration. In the full resolvosome a probable DNA-RuvA(4)-RuvB(12)-RuvC(2) complex forms which resolves the HJ.

The protein localises to the cytoplasm. The enzyme catalyses ATP + H2O = ADP + phosphate + H(+). Its function is as follows. The RuvA-RuvB-RuvC complex processes Holliday junction (HJ) DNA during genetic recombination and DNA repair, while the RuvA-RuvB complex plays an important role in the rescue of blocked DNA replication forks via replication fork reversal (RFR). RuvA specifically binds to HJ cruciform DNA, conferring on it an open structure. The RuvB hexamer acts as an ATP-dependent pump, pulling dsDNA into and through the RuvAB complex. RuvB forms 2 homohexamers on either side of HJ DNA bound by 1 or 2 RuvA tetramers; 4 subunits per hexamer contact DNA at a time. Coordinated motions by a converter formed by DNA-disengaged RuvB subunits stimulates ATP hydrolysis and nucleotide exchange. Immobilization of the converter enables RuvB to convert the ATP-contained energy into a lever motion, pulling 2 nucleotides of DNA out of the RuvA tetramer per ATP hydrolyzed, thus driving DNA branch migration. The RuvB motors rotate together with the DNA substrate, which together with the progressing nucleotide cycle form the mechanistic basis for DNA recombination by continuous HJ branch migration. Branch migration allows RuvC to scan DNA until it finds its consensus sequence, where it cleaves and resolves cruciform DNA. The chain is Holliday junction branch migration complex subunit RuvB from Pseudothermotoga lettingae (strain ATCC BAA-301 / DSM 14385 / NBRC 107922 / TMO) (Thermotoga lettingae).